A 305-amino-acid chain; its full sequence is MSERKALLILHGKQALNEAVRAAVENKRKQGWKLAVRLTWEAGDAQRLVEEALAAGYRQIIAGGGDGTLRDIAEALAKQPGKASLVLLPLGTANDFSRAAAISLEPAEALELLEAPAHDIDLGEVGGQIFLNMATGGFGSQVTANTSEDLKKVLGGAAYLFTGLSRFSELHAAYGELQGPDFHWRGELLALGIGNGRQAGGGHVLCPEALVDDGLLDISILPAPQELVGTLKNLLSDGFGIDNMFVRARLPWVEIKVAEGLYINLDGEPLEGESLRFAARAGALRVHLPKDSPLLSATHRISHPD.

One can recognise a DAGKc domain in the interval 1–129 (MSERKALLIL…IDLGEVGGQI (129 aa)). Residues Thr39, 65-71 (GDGTLRD), and Thr92 each bind ATP. Mg(2+) is bound by residues Leu210, Asp213, and Leu215. The Proton acceptor role is filled by Glu268.

This sequence belongs to the diacylglycerol/lipid kinase family. YegS lipid kinase subfamily. It depends on Mg(2+) as a cofactor. The cofactor is Ca(2+).

It is found in the cytoplasm. Functionally, probably phosphorylates lipids; the in vivo substrate is unknown. This Pseudomonas fluorescens (strain Pf0-1) protein is Probable lipid kinase YegS-like.